The sequence spans 232 residues: Ribosomal RNA small subunit methyltransferase G (232 aa).

S-adenosyl-L-methionine is bound by residues Gly-75, Phe-80, 126–127 (AE), and Arg-143.

It belongs to the methyltransferase superfamily. RNA methyltransferase RsmG family.

It localises to the cytoplasm. Its function is as follows. Specifically methylates the N7 position of a guanine in 16S rRNA. This chain is Ribosomal RNA small subunit methyltransferase G, found in Fusobacterium nucleatum subsp. nucleatum (strain ATCC 25586 / DSM 15643 / BCRC 10681 / CIP 101130 / JCM 8532 / KCTC 2640 / LMG 13131 / VPI 4355).